Here is a 257-residue protein sequence, read N- to C-terminus: Ribosomal RNA small subunit methyltransferase J (257 aa).

S-adenosyl-L-methionine is bound by residues 107-108 (RD), 123-124 (ER), and aspartate 177.

Belongs to the methyltransferase superfamily. RsmJ family.

The protein localises to the cytoplasm. The enzyme catalyses guanosine(1516) in 16S rRNA + S-adenosyl-L-methionine = N(2)-methylguanosine(1516) in 16S rRNA + S-adenosyl-L-homocysteine + H(+). Its function is as follows. Specifically methylates the guanosine in position 1516 of 16S rRNA. The chain is Ribosomal RNA small subunit methyltransferase J from Haemophilus influenzae (strain PittGG).